The chain runs to 169 residues: Ribosome maturation factor RimM (169 aa).

Residues 94–168 enclose the PRC barrel domain; the sequence is DDEFYHADLI…RIVADPPEGL (75 aa).

This sequence belongs to the RimM family. In terms of assembly, binds ribosomal protein uS19.

Its subcellular location is the cytoplasm. Its function is as follows. An accessory protein needed during the final step in the assembly of 30S ribosomal subunit, possibly for assembly of the head region. Essential for efficient processing of 16S rRNA. May be needed both before and after RbfA during the maturation of 16S rRNA. It has affinity for free ribosomal 30S subunits but not for 70S ribosomes. In Cereibacter sphaeroides (strain ATCC 17025 / ATH 2.4.3) (Rhodobacter sphaeroides), this protein is Ribosome maturation factor RimM.